The sequence spans 319 residues: ATP-dependent 6-phosphofructokinase (319 aa).

Gly-11 is a binding site for ATP. ADP is bound at residue 21–25; the sequence is RAVTR. Residues 72–73 and 102–105 contribute to the ATP site; these read RF and GDGS. Asp-103 provides a ligand contact to Mg(2+). 125-127 contributes to the substrate binding site; that stretch reads SID. Asp-127 (proton acceptor) is an active-site residue. Arg-154 contributes to the ADP binding site. Substrate is bound by residues Arg-162 and 169-171; that span reads MGR. ADP contacts are provided by residues 185–187 and 213–215; these read GAD and KKH. Residues Glu-222, Arg-243, and 249-252 each bind substrate; that span reads HMQR.

Belongs to the phosphofructokinase type A (PFKA) family. ATP-dependent PFK group I subfamily. Prokaryotic clade 'B1' sub-subfamily. As to quaternary structure, homotetramer. It depends on Mg(2+) as a cofactor.

The protein localises to the cytoplasm. The catalysed reaction is beta-D-fructose 6-phosphate + ATP = beta-D-fructose 1,6-bisphosphate + ADP + H(+). Its pathway is carbohydrate degradation; glycolysis; D-glyceraldehyde 3-phosphate and glycerone phosphate from D-glucose: step 3/4. Its activity is regulated as follows. Allosterically activated by ADP and other diphosphonucleosides, and allosterically inhibited by phosphoenolpyruvate. Its function is as follows. Catalyzes the phosphorylation of D-fructose 6-phosphate to fructose 1,6-bisphosphate by ATP, the first committing step of glycolysis. In Lactobacillus johnsonii (strain CNCM I-12250 / La1 / NCC 533), this protein is ATP-dependent 6-phosphofructokinase.